The sequence spans 121 residues: Small ribosomal subunit protein uS13 (121 aa).

A disordered region spans residues 91-121; it reads HRRGLPVRGQNTKNNARTRKGKKASMAGKKK. Positions 106–121 are enriched in basic residues; the sequence is ARTRKGKKASMAGKKK.

Belongs to the universal ribosomal protein uS13 family. As to quaternary structure, part of the 30S ribosomal subunit. Forms a loose heterodimer with protein S19. Forms two bridges to the 50S subunit in the 70S ribosome.

Located at the top of the head of the 30S subunit, it contacts several helices of the 16S rRNA. In the 70S ribosome it contacts the 23S rRNA (bridge B1a) and protein L5 of the 50S subunit (bridge B1b), connecting the 2 subunits; these bridges are implicated in subunit movement. Contacts the tRNAs in the A and P-sites. The protein is Small ribosomal subunit protein uS13 of Lacticaseibacillus paracasei (strain ATCC 334 / BCRC 17002 / CCUG 31169 / CIP 107868 / KCTC 3260 / NRRL B-441) (Lactobacillus paracasei).